A 347-amino-acid polypeptide reads, in one-letter code: NADH-ubiquinone oxidoreductase chain 2 (347 aa).

Helical transmembrane passes span 4–21, 26–45, 59–79, 96–116, 122–142, 148–168, 201–221, 242–262, 274–294, and 326–346; these read LILS…LIVM, WLMV…PVLM, YFLT…INLI, IIMT…FWVP, IQLS…MSIL, AINM…GGWG, ALLN…TFML, TTIL…GFLP, DSII…YFYM, and LPPL…LMLL.

This sequence belongs to the complex I subunit 2 family. In terms of assembly, core subunit of respiratory chain NADH dehydrogenase (Complex I) which is composed of 45 different subunits. Interacts with TMEM242.

It is found in the mitochondrion inner membrane. The catalysed reaction is a ubiquinone + NADH + 5 H(+)(in) = a ubiquinol + NAD(+) + 4 H(+)(out). Functionally, core subunit of the mitochondrial membrane respiratory chain NADH dehydrogenase (Complex I) which catalyzes electron transfer from NADH through the respiratory chain, using ubiquinone as an electron acceptor. Essential for the catalytic activity and assembly of complex I. The protein is NADH-ubiquinone oxidoreductase chain 2 of Syconycteris australis (Southern blossom bat).